The chain runs to 454 residues: tRNA modification GTPase MnmE (454 aa).

(6S)-5-formyl-5,6,7,8-tetrahydrofolate is bound by residues Arg-23, Glu-80, and Lys-120. The TrmE-type G domain maps to 216-377; that stretch reads GMKVVIAGRP…LRNHLKQSMG (162 aa). Position 226 (Asn-226) interacts with K(+). GTP-binding positions include 226-231, 245-251, 270-273, 335-338, and 358-360; these read NAGKSS, TDIAGTT, DTAG, NKAD, and SAR. Ser-230 contributes to the Mg(2+) binding site. K(+) is bound by residues Thr-245, Ile-247, and Thr-250. Thr-251 lines the Mg(2+) pocket. (6S)-5-formyl-5,6,7,8-tetrahydrofolate is bound at residue Lys-454.

Belongs to the TRAFAC class TrmE-Era-EngA-EngB-Septin-like GTPase superfamily. TrmE GTPase family. Homodimer. Heterotetramer of two MnmE and two MnmG subunits. K(+) serves as cofactor.

Its subcellular location is the cytoplasm. Functionally, exhibits a very high intrinsic GTPase hydrolysis rate. Involved in the addition of a carboxymethylaminomethyl (cmnm) group at the wobble position (U34) of certain tRNAs, forming tRNA-cmnm(5)s(2)U34. This Escherichia coli O127:H6 (strain E2348/69 / EPEC) protein is tRNA modification GTPase MnmE.